The chain runs to 102 residues: NADH-quinone oxidoreductase subunit K 1 (102 aa).

3 consecutive transmembrane segments (helical) span residues 3-23 (TLTTYLVIAAVLFCLGLLGIL), 29-49 (VGMLISLELMLNGANLNFMAF), and 62-82 (IIALIVMGLAAAEAAIGLSII).

This sequence belongs to the complex I subunit 4L family. NDH-1 is composed of 14 different subunits. Subunits NuoA, H, J, K, L, M, N constitute the membrane sector of the complex.

It is found in the cell inner membrane. It catalyses the reaction a quinone + NADH + 5 H(+)(in) = a quinol + NAD(+) + 4 H(+)(out). Its function is as follows. NDH-1 shuttles electrons from NADH, via FMN and iron-sulfur (Fe-S) centers, to quinones in the respiratory chain. The immediate electron acceptor for the enzyme in this species is believed to be ubiquinone. Couples the redox reaction to proton translocation (for every two electrons transferred, four hydrogen ions are translocated across the cytoplasmic membrane), and thus conserves the redox energy in a proton gradient. This Syntrophobacter fumaroxidans (strain DSM 10017 / MPOB) protein is NADH-quinone oxidoreductase subunit K 1.